Reading from the N-terminus, the 231-residue chain is Ribonuclease 3 (231 aa).

Residues 5–134 enclose the RNase III domain; it reads QKKLKNDYGL…FLGALFIDQG (130 aa). Mg(2+) is bound at residue Glu47. The active site involves Asp51. Mg(2+) is bound by residues Asn120 and Glu123. Glu123 is an active-site residue. Positions 160-229 constitute a DRBM domain; it reads DYKTELQEVL…AENAIKGQNH (70 aa).

It belongs to the ribonuclease III family. As to quaternary structure, homodimer. Mg(2+) is required as a cofactor.

Its subcellular location is the cytoplasm. The enzyme catalyses Endonucleolytic cleavage to 5'-phosphomonoester.. Digests double-stranded RNA. Involved in the processing of primary rRNA transcript to yield the immediate precursors to the large and small rRNAs (23S and 16S). Processes some mRNAs, and tRNAs when they are encoded in the rRNA operon. Processes pre-crRNA and tracrRNA of type II CRISPR loci if present in the organism. The chain is Ribonuclease 3 from Lactococcus lactis subsp. lactis (strain IL1403) (Streptococcus lactis).